The sequence spans 529 residues: ATP synthase subunit alpha (529 aa).

173-180 contacts ATP; sequence GDRQTGKT.

It belongs to the ATPase alpha/beta chains family. In terms of assembly, F-type ATPases have 2 components, CF(1) - the catalytic core - and CF(0) - the membrane proton channel. CF(1) has five subunits: alpha(3), beta(3), gamma(1), delta(1), epsilon(1). CF(0) has three main subunits: a(1), b(2) and c(9-12). The alpha and beta chains form an alternating ring which encloses part of the gamma chain. CF(1) is attached to CF(0) by a central stalk formed by the gamma and epsilon chains, while a peripheral stalk is formed by the delta and b chains.

It localises to the cell membrane. It carries out the reaction ATP + H2O + 4 H(+)(in) = ADP + phosphate + 5 H(+)(out). Functionally, produces ATP from ADP in the presence of a proton gradient across the membrane. The alpha chain is a regulatory subunit. This is ATP synthase subunit alpha from Streptomyces avermitilis (strain ATCC 31267 / DSM 46492 / JCM 5070 / NBRC 14893 / NCIMB 12804 / NRRL 8165 / MA-4680).